The following is a 274-amino-acid chain: Dermonecrotic toxin SdSicTox-betaIIB1bix (274 aa).

His5 is a catalytic residue. Residues Glu25 and Asp27 each contribute to the Mg(2+) site. His41 functions as the Nucleophile in the catalytic mechanism. Disulfide bonds link Cys45/Cys51 and Cys47/Cys190. Position 85 (Asp85) interacts with Mg(2+).

It belongs to the arthropod phospholipase D family. Class II subfamily. Mg(2+) serves as cofactor. As to expression, expressed by the venom gland.

It localises to the secreted. The catalysed reaction is an N-(acyl)-sphingosylphosphocholine = an N-(acyl)-sphingosyl-1,3-cyclic phosphate + choline. The enzyme catalyses an N-(acyl)-sphingosylphosphoethanolamine = an N-(acyl)-sphingosyl-1,3-cyclic phosphate + ethanolamine. It catalyses the reaction a 1-acyl-sn-glycero-3-phosphocholine = a 1-acyl-sn-glycero-2,3-cyclic phosphate + choline. It carries out the reaction a 1-acyl-sn-glycero-3-phosphoethanolamine = a 1-acyl-sn-glycero-2,3-cyclic phosphate + ethanolamine. Functionally, dermonecrotic toxins cleave the phosphodiester linkage between the phosphate and headgroup of certain phospholipids (sphingolipid and lysolipid substrates), forming an alcohol (often choline) and a cyclic phosphate. This toxin acts on sphingomyelin (SM). It may also act on ceramide phosphoethanolamine (CPE), lysophosphatidylcholine (LPC) and lysophosphatidylethanolamine (LPE), but not on lysophosphatidylserine (LPS), and lysophosphatidylglycerol (LPG). It acts by transphosphatidylation, releasing exclusively cyclic phosphate products as second products. Induces dermonecrosis, hemolysis, increased vascular permeability, edema, inflammatory response, and platelet aggregation. In Sicarius cf. damarensis (strain GJB-2008) (Six-eyed sand spider), this protein is Dermonecrotic toxin SdSicTox-betaIIB1bix.